Here is a 516-residue protein sequence, read N- to C-terminus: Probable 2-methylcitrate dehydratase (516 aa).

This sequence belongs to the PrpD family.

It catalyses the reaction (2S,3S)-2-methylcitrate = 2-methyl-cis-aconitate + H2O. It functions in the pathway organic acid metabolism; propanoate degradation. Catalyzes the stereospecific dehydration of (2S,3S)-2-methylcitrate (2-MC) to yield the cis isomer of 2-methyl-aconitate. This chain is Probable 2-methylcitrate dehydratase (PDH1), found in Saccharomyces cerevisiae (strain ATCC 204508 / S288c) (Baker's yeast).